The primary structure comprises 349 residues: 5,10-methylenetetrahydromethanopterin reductase (349 aa).

This sequence belongs to the mer family. Homotetramer composed of two loosely associated dimers.

It localises to the cytoplasm. The catalysed reaction is 5-methyl-5,6,7,8-tetrahydromethanopterin + oxidized coenzyme F420-(gamma-L-Glu)(n) + H(+) = 5,10-methylenetetrahydromethanopterin + reduced coenzyme F420-(gamma-L-Glu)(n). The protein operates within one-carbon metabolism; methanogenesis from CO(2); methyl-coenzyme M from 5,10-methylene-5,6,7,8-tetrahydromethanopterin: step 1/2. With respect to regulation, requires the presence of relatively high concentrations of either sulfate or phosphate for maximal activity. Functionally, catalyzes the reversible reduction of methylene-H(4)MPT to methyl-H(4)MPT. This chain is 5,10-methylenetetrahydromethanopterin reductase, found in Methanopyrus kandleri (strain AV19 / DSM 6324 / JCM 9639 / NBRC 100938).